The following is a 62-amino-acid chain: Prokaryotic ubiquitin-like protein Pup (62 aa).

A disordered region spans residues 1–36; sequence MEKSSQIHGSKPGDDNADEPENAAGQSQIRKQGADD. Positions 18 to 56 are ARC ATPase binding; sequence DEPENAAGQSQIRKQGADDLLDEIDGLLESNAEEFVRSY. Glutamine 62 is modified (deamidated glutamine). An Isoglutamyl lysine isopeptide (Gln-Lys) (interchain with K-? in acceptor proteins) cross-link involves residue glutamine 62.

Belongs to the prokaryotic ubiquitin-like protein family. Strongly interacts with the proteasome-associated ATPase ARC through a hydrophobic interface; the interacting region of Pup lies in its C-terminal half. There is one Pup binding site per ARC hexamer ring. Post-translationally, is modified by deamidation of its C-terminal glutamine to glutamate by the deamidase Dop, a prerequisite to the subsequent pupylation process.

The protein operates within protein degradation; proteasomal Pup-dependent pathway. Its function is as follows. Protein modifier that is covalently attached to lysine residues of substrate proteins, thereby targeting them for proteasomal degradation. The tagging system is termed pupylation. In Corynebacterium kroppenstedtii (strain DSM 44385 / JCM 11950 / CIP 105744 / CCUG 35717), this protein is Prokaryotic ubiquitin-like protein Pup.